Consider the following 512-residue polypeptide: Lysine--tRNA ligase (512 aa).

Mg(2+)-binding residues include glutamate 408 and glutamate 415.

It belongs to the class-II aminoacyl-tRNA synthetase family. Homodimer. The cofactor is Mg(2+).

The protein localises to the cytoplasm. It carries out the reaction tRNA(Lys) + L-lysine + ATP = L-lysyl-tRNA(Lys) + AMP + diphosphate. The chain is Lysine--tRNA ligase from Prochlorococcus marinus (strain MIT 9515).